A 506-amino-acid polypeptide reads, in one-letter code: Ribose import ATP-binding protein RbsA 2 (506 aa).

ABC transporter domains lie at 7 to 242 (LEMR…VGRP) and 250 to 497 (ERDI…TGVN). 39–46 (GENGAGKS) contributes to the ATP binding site.

It belongs to the ABC transporter superfamily. Ribose importer (TC 3.A.1.2.1) family. In terms of assembly, the complex is composed of an ATP-binding protein (RbsA), two transmembrane proteins (RbsC) and a solute-binding protein (RbsB).

Its subcellular location is the cell inner membrane. The enzyme catalyses D-ribose(out) + ATP + H2O = D-ribose(in) + ADP + phosphate + H(+). Functionally, part of the ABC transporter complex RbsABC involved in ribose import. Responsible for energy coupling to the transport system. The sequence is that of Ribose import ATP-binding protein RbsA 2 from Escherichia coli O157:H7.